The following is a 62-amino-acid chain: Large ribosomal subunit protein uL29 (62 aa).

This sequence belongs to the universal ribosomal protein uL29 family.

The sequence is that of Large ribosomal subunit protein uL29 from Amoebophilus asiaticus (strain 5a2).